The chain runs to 104 residues: MKPCQKMEGNLEKEDEPKPEEEPKPEEKPEEGQEPEEEEKSEETFRERLIRSLQDFQEDIHNRHLSSDDLFRDVEELDEIRKVRNKLIVTRWKANRSHPYPYLM.

The interval 1–48 is disordered; it reads MKPCQKMEGNLEKEDEPKPEEEPKPEEKPEEGQEPEEEEKSEETFRER. The span at 9-31 shows a compositional bias: basic and acidic residues; that stretch reads GNLEKEDEPKPEEEPKPEEKPEE. Residues 32–41 are compositionally biased toward acidic residues; it reads GQEPEEEEKS.

Belongs to the TFS-II family. TFA subfamily.

It localises to the nucleus. Its function is as follows. May be involved in transcriptional regulation. The sequence is that of Transcription elongation factor A protein-like 9 (Tceal9) from Mus musculus (Mouse).